The chain runs to 564 residues: Arginine--tRNA ligase (564 aa).

The 'HIGH' region motif lies at 136-146 (ANPTGPLHMGN).

This sequence belongs to the class-I aminoacyl-tRNA synthetase family. In terms of assembly, monomer.

Its subcellular location is the cytoplasm. It carries out the reaction tRNA(Arg) + L-arginine + ATP = L-arginyl-tRNA(Arg) + AMP + diphosphate. In Ruminiclostridium cellulolyticum (strain ATCC 35319 / DSM 5812 / JCM 6584 / H10) (Clostridium cellulolyticum), this protein is Arginine--tRNA ligase.